The chain runs to 219 residues: Response regulator ArlR (219 aa).

Positions asparagine 3–leucine 116 constitute a Response regulatory domain. Aspartate 52 carries the post-translational modification 4-aspartylphosphate. The segment at residues lysine 122 to arginine 219 is a DNA-binding region (ompR/PhoB-type).

Phosphorylated by ArlS.

The protein resides in the cytoplasm. Its function is as follows. Member of the two-component regulatory system ArlS/ArlR. The sequence is that of Response regulator ArlR (arlR) from Staphylococcus epidermidis (strain ATCC 35984 / DSM 28319 / BCRC 17069 / CCUG 31568 / BM 3577 / RP62A).